Here is a 209-residue protein sequence, read N- to C-terminus: Glutathione S-transferase 1-1 (209 aa).

Residues 1–81 enclose the GST N-terminal domain; the sequence is MADFYYLPGS…YLVEKYGKTD (81 aa). Glutathione is bound by residues Ser-10, 51 to 53, and 65 to 67; these read HTI and ESR. Residues 87 to 209 enclose the GST C-terminal domain; the sequence is CPKKRAVINQ…GCLEFKKYFE (123 aa).

Belongs to the GST superfamily. Theta family. As to quaternary structure, homodimer.

The catalysed reaction is RX + glutathione = an S-substituted glutathione + a halide anion + H(+). It carries out the reaction 1,1,1-trichloro-2,2-bis(4-chlorophenyl)ethane = 1,1-dichloro-2,2-bis(4-chlorophenyl)ethylene + chloride + H(+). Its function is as follows. Conjugation of reduced glutathione to a wide number of exogenous and endogenous hydrophobic electrophiles. Has DDT dehydrochlorinase activity. This is Glutathione S-transferase 1-1 (GstD1) from Drosophila simulans (Fruit fly).